The following is a 335-amino-acid chain: Beta-ketoacyl-[acyl-carrier-protein] synthase III (335 aa).

Catalysis depends on residues Cys117 and His258. Residues 259-263 are ACP-binding; sequence QANQR. Residue Asn288 is part of the active site.

Belongs to the thiolase-like superfamily. FabH family. In terms of assembly, homodimer.

It is found in the cytoplasm. The enzyme catalyses malonyl-[ACP] + acetyl-CoA + H(+) = 3-oxobutanoyl-[ACP] + CO2 + CoA. It participates in lipid metabolism; fatty acid biosynthesis. Functionally, catalyzes the condensation reaction of fatty acid synthesis by the addition to an acyl acceptor of two carbons from malonyl-ACP. Catalyzes the first condensation reaction which initiates fatty acid synthesis and may therefore play a role in governing the total rate of fatty acid production. Possesses both acetoacetyl-ACP synthase and acetyl transacylase activities. Its substrate specificity determines the biosynthesis of branched-chain and/or straight-chain of fatty acids. This chain is Beta-ketoacyl-[acyl-carrier-protein] synthase III, found in Synechococcus elongatus (strain ATCC 33912 / PCC 7942 / FACHB-805) (Anacystis nidulans R2).